The following is a 191-amino-acid chain: Large ribosomal subunit protein bL9 (191 aa).

This sequence belongs to the bacterial ribosomal protein bL9 family.

Its function is as follows. Binds to the 23S rRNA. In Granulibacter bethesdensis (strain ATCC BAA-1260 / CGDNIH1), this protein is Large ribosomal subunit protein bL9.